The following is a 392-amino-acid chain: Na(+)/H(+) antiporter NhaA 2 (392 aa).

The next 11 helical transmembrane spans lie at 20 to 40, 63 to 83, 99 to 119, 127 to 147, 158 to 178, 181 to 201, 209 to 229, 265 to 285, 298 to 318, 336 to 356, and 365 to 385; these read FFAA…AALI, VEHW…GLEI, ALPG…YVAF, IGGW…VLSL, IFLS…IALF, SDLS…LVAL, LLPY…SGIH, VAFA…LSGI, VALG…ALAI, GVAA…ALAF, and EVKV…VVVL.

This sequence belongs to the NhaA Na(+)/H(+) (TC 2.A.33) antiporter family.

The protein localises to the cell inner membrane. It carries out the reaction Na(+)(in) + 2 H(+)(out) = Na(+)(out) + 2 H(+)(in). Functionally, na(+)/H(+) antiporter that extrudes sodium in exchange for external protons. This Pseudomonas savastanoi pv. phaseolicola (strain 1448A / Race 6) (Pseudomonas syringae pv. phaseolicola (strain 1448A / Race 6)) protein is Na(+)/H(+) antiporter NhaA 2.